A 129-amino-acid polypeptide reads, in one-letter code: Glycine cleavage system H protein (129 aa).

The Lipoyl-binding domain occupies Ser-24–Met-106. At Lys-65 the chain carries N6-lipoyllysine.

This sequence belongs to the GcvH family. As to quaternary structure, the glycine cleavage system is composed of four proteins: P, T, L and H. It depends on (R)-lipoate as a cofactor.

Functionally, the glycine cleavage system catalyzes the degradation of glycine. The H protein shuttles the methylamine group of glycine from the P protein to the T protein. The chain is Glycine cleavage system H protein from Shewanella woodyi (strain ATCC 51908 / MS32).